We begin with the raw amino-acid sequence, 143 residues long: Putative transmembrane protein ORF32 (143 aa).

2 helical membrane-spanning segments follow: residues 20–42 and 52–74; these read GISG…SFTL and WPLI…EGGV.

Its subcellular location is the host membrane. In Haloarcula hispanica (His1V), this protein is Putative transmembrane protein ORF32.